Here is a 271-residue protein sequence, read N- to C-terminus: Phosphate import ATP-binding protein PstB (271 aa).

Residues 25 to 266 enclose the ABC transporter domain; that stretch reads VDVRQLSLWY…PKHPYTEAYI (242 aa). 57 to 64 is an ATP binding site; the sequence is GPSGCGKS.

This sequence belongs to the ABC transporter superfamily. Phosphate importer (TC 3.A.1.7) family. In terms of assembly, the complex is composed of two ATP-binding proteins (PstB), two transmembrane proteins (PstC and PstA) and a solute-binding protein (PstS).

Its subcellular location is the cell inner membrane. It carries out the reaction phosphate(out) + ATP + H2O = ADP + 2 phosphate(in) + H(+). In terms of biological role, part of the ABC transporter complex PstSACB involved in phosphate import. Responsible for energy coupling to the transport system. This is Phosphate import ATP-binding protein PstB from Thermus thermophilus (strain ATCC BAA-163 / DSM 7039 / HB27).